The primary structure comprises 100 residues: UPF0473 protein Lm4b_01511 (100 aa).

This sequence belongs to the UPF0473 family.

The chain is UPF0473 protein Lm4b_01511 from Listeria monocytogenes serotype 4b (strain CLIP80459).